Here is an 845-residue protein sequence, read N- to C-terminus: Extended synaptotagmin-2 (845 aa).

Residues 1-17 (MSSAGGEGPEAGPGRAG) show a composition bias toward gly residues. The interval 1–26 (MSSAGGEGPEAGPGRAGGRSEPEAPG) is disordered. The Cytoplasmic portion of the chain corresponds to 1–27 (MSSAGGEGPEAGPGRAGGRSEPEAPGS). The chain crosses the membrane as a helical span at residues 28–48 (ALSVDLPGLLGQLARSFALLL). Residues 49 to 51 (PVY) are Lumenal-facing. A helical transmembrane segment spans residues 52-72 (ALGYLGLSFSWVLLALGLLAW). At 73 to 845 (CRRSRGLKAS…EDGTRPQVIT (773 aa)) the chain is on the cytoplasmic side. An SMP-LTD domain is found at 115–294 (DTERAEWLNK…LPNRITVPLV (180 aa)). C2 domains follow at residues 293 to 413 (LVSE…DEWF) and 442 to 563 (VLAD…QLSN). Ca(2+) contacts are provided by lysine 324, aspartate 325, aspartate 337, aspartate 384, glutamate 385, aspartate 386, aspartate 388, aspartate 390, and aspartate 391. Residues 584-664 (QERPPDYQHS…RDLGRSSSSL (81 aa)) form a disordered region. A compositionally biased stretch (polar residues) spans 612 to 628 (SQMSASPGTGGANTAPS). Serine 615 and serine 617 each carry phosphoserine. Phosphothreonine is present on threonine 629. The span at 634–645 (VDDKPAMEEKPQ) shows a compositional bias: basic and acidic residues. 7 positions are modified to phosphoserine: serine 660, serine 662, serine 663, serine 667, serine 679, serine 682, and serine 685. Residues 710 to 832 (PLGQIQLTIR…ELAKGWTQWY (123 aa)) form the C2 3 domain. A required for phosphatidylinositol 4,5-bisphosphate-dependent location at the cell membrane region spans residues 757-764 (KRRSGRRK).

It belongs to the extended synaptotagmin family. In terms of assembly, homodimer. Interacts with ESYT1 and ESYT3. Interacts with FGFR1 that has been activated by FGF1 binding. Interacts with the AP-2 complex; identified in a complex with the AP-2 complex and FGFR1.

It is found in the cell membrane. It localises to the endoplasmic reticulum membrane. Its function is as follows. Tethers the endoplasmic reticulum to the cell membrane and promotes the formation of appositions between the endoplasmic reticulum and the cell membrane. Binds glycerophospholipids in a barrel-like domain and may play a role in cellular lipid transport. Plays a role in FGF signaling via its role in the rapid internalization of FGFR1 that has been activated by FGF1 binding; this occurs most likely via the AP-2 complex. Promotes the localization of SACM1L at endoplasmic reticulum-plasma membrane contact sites (EPCS). This is Extended synaptotagmin-2 (Esyt2) from Mus musculus (Mouse).